A 1116-amino-acid chain; its full sequence is Eukaryotic translation initiation factor 2-alpha kinase 3 (1116 aa).

A signal peptide spans 1 to 29; it reads MERAISPGLLVRALLLLLLLLGLAARTVA. The Lumenal portion of the chain corresponds to 30-514; sequence AGRARGLPAP…HYNKNIRKKD (485 aa). The segment at 77-101 is disordered; the sequence is ALPAAAGEQEPRGPEPDDETELRPR. N-linked (GlcNAc...) asparagine glycosylation occurs at Asn258. The chain crosses the membrane as a helical span at residues 515-535; that stretch reads PVLLLHWWKEIVATILFCIIA. The Cytoplasmic segment spans residues 536–1116; the sequence is TTFIVRRLFH…NNSHSPLPSN (581 aa). The segment at 550–571 is disordered; the sequence is RQRKESETQCQTENKYDSVSGE. One can recognise a Protein kinase domain in the interval 593 to 1077; that stretch reads FEPIQCLGRG…AINIIENAVF (485 aa). 599-607 serves as a coordination point for ATP; that stretch reads LGRGGFGVV. The residue at position 619 (Tyr619) is a Phosphotyrosine; by autocatalysis. Residue Lys622 coordinates ATP. The segment at 647 to 888 is insert loop; it reads EHPGIVRYFN…SPKVYLYIQM (242 aa). Ser715 carries the phosphoserine modification. Position 802 is a phosphothreonine (Thr802). Positions 841–863 are disordered; sequence KPTSSKSSSEATLSISPPRPTTL. Residues 844 to 856 are compositionally biased toward low complexity; it reads SSKSSSEATLSIS. Catalysis depends on Asp937, which acts as the Proton acceptor. Phosphothreonine is present on Thr982. The interval 1090 to 1116 is disordered; that stretch reads QRSRSLSSSGTKHSRQSNNSHSPLPSN. Ser1094 is modified (phosphoserine). Positions 1105 to 1116 are enriched in polar residues; that stretch reads QSNNSHSPLPSN.

The protein belongs to the protein kinase superfamily. Ser/Thr protein kinase family. GCN2 subfamily. Forms dimers with HSPA5/BIP in resting cells. Homotetramerizes in response to endoplasmic reticulum (ER) stress, leading to its activation. Interacts with HSP90B1/GRP94. Interacts with DNAJC3; inhibiting EIF2AK3/PERK activity. Interacts with ATAD3A; ATAD3A and EIF2S1/eIF-2-alpha occupy a common binding site within the cytoplasmic loop of EIF2AK3/PERK, leading to prevent EIF2AK3/PERK association with its substrate EIF2S1/eIF-2-alpha. Interacts with MFN2. Interacts with TMEM33. Interacts with PDIA6. Interacts with LACC1. Oligomerization of the N-terminal ER luminal domain by ER stress promotes EIF2AK3/PERK trans-autophosphorylation of the C-terminal cytoplasmic kinase domain at multiple residues including Thr-982 on the kinase activation loop. Autophosphorylated at Tyr-619 following endoplasmic reticulum stress, leading to activate its activity. Dephosphorylated at Tyr-619 by PTPN1/PTP1B, leading to inactivate its enzyme activity. Phosphorylation at Thr-802 by AKT (AKT1, AKT2 and/or AKT3) inactivates EIF2AK3/PERK. In terms of processing, ADP-ribosylated by PARP16 upon ER stress, which increases kinase activity. Ubiquitous. A high level expression is seen in secretory tissues.

The protein localises to the endoplasmic reticulum membrane. The enzyme catalyses L-seryl-[protein] + ATP = O-phospho-L-seryl-[protein] + ADP + H(+). The catalysed reaction is L-threonyl-[protein] + ATP = O-phospho-L-threonyl-[protein] + ADP + H(+). It carries out the reaction L-tyrosyl-[protein] + ATP = O-phospho-L-tyrosyl-[protein] + ADP + H(+). With respect to regulation, inhibited by HSPA5/BIP in absence of stress. Perturbation in protein folding in the endoplasmic reticulum (ER) promotes reversible dissociation from HSPA5/BIP and oligomerization, resulting in trans-autophosphorylation and kinase activity induction. Inactivated following phosphorylation at Thr-802 by AKT (AKT1, AKT2 and/or AKT3). Inhibited by ATAD3A at mitochondria-endoplasmic reticulum contact sites, providing a safe haven for mitochondrial protein translation during ER stress. Metabolic-stress sensing protein kinase that phosphorylates the alpha subunit of eukaryotic translation initiation factor 2 (EIF2S1/eIF-2-alpha) in response to various stress, such as unfolded protein response (UPR). Key effector of the integrated stress response (ISR) to unfolded proteins: EIF2AK3/PERK specifically recognizes and binds misfolded proteins, leading to its activation and EIF2S1/eIF-2-alpha phosphorylation. EIF2S1/eIF-2-alpha phosphorylation in response to stress converts EIF2S1/eIF-2-alpha in a global protein synthesis inhibitor, leading to a global attenuation of cap-dependent translation, while concomitantly initiating the preferential translation of ISR-specific mRNAs, such as the transcriptional activators ATF4 and QRICH1, and hence allowing ATF4- and QRICH1-mediated reprogramming. The EIF2AK3/PERK-mediated unfolded protein response increases mitochondrial oxidative phosphorylation by promoting ATF4-mediated expression of COX7A2L/SCAF1, thereby increasing formation of respiratory chain supercomplexes. In contrast to most subcellular compartments, mitochondria are protected from the EIF2AK3/PERK-mediated unfolded protein response due to EIF2AK3/PERK inhibition by ATAD3A at mitochondria-endoplasmic reticulum contact sites. In addition to EIF2S1/eIF-2-alpha, also phosphorylates NFE2L2/NRF2 in response to stress, promoting release of NFE2L2/NRF2 from the BCR(KEAP1) complex, leading to nuclear accumulation and activation of NFE2L2/NRF2. Serves as a critical effector of unfolded protein response (UPR)-induced G1 growth arrest due to the loss of cyclin-D1 (CCND1). Involved in control of mitochondrial morphology and function. The protein is Eukaryotic translation initiation factor 2-alpha kinase 3 of Homo sapiens (Human).